Here is a 92-residue protein sequence, read N- to C-terminus: Small ribosomal subunit protein uS19 (92 aa).

Belongs to the universal ribosomal protein uS19 family.

Protein S19 forms a complex with S13 that binds strongly to the 16S ribosomal RNA. The polypeptide is Small ribosomal subunit protein uS19 (Prochlorococcus marinus (strain MIT 9215)).